A 95-amino-acid chain; its full sequence is Putative defensin-like protein 252 (95 aa).

A signal peptide spans 1–27; that stretch reads MRCVTSFVVLCILMFLVVNNVKVDVKA. 4 cysteine pairs are disulfide-bonded: cysteine 34/cysteine 93, cysteine 45/cysteine 72, cysteine 56/cysteine 85, and cysteine 70/cysteine 87.

This sequence belongs to the DEFL family.

It localises to the secreted. The protein is Putative defensin-like protein 252 (SCRL13) of Arabidopsis thaliana (Mouse-ear cress).